The sequence spans 194 residues: Histone H1.0 (194 aa).

Met1 carries the post-translational modification N-acetylmethionine. The span at 1-11 shows a compositional bias: low complexity; the sequence is MTENSTSAPAA. The tract at residues 1–29 is disordered; the sequence is MTENSTSAPAAKPKRAKASKKSTDHPKYS. At Thr2 the chain carries N-acetylthreonine; partial; in Histone H1.0, N-terminally processed. Asn4 carries the deamidated asparagine; partial modification. The H15 domain maps to 24–97; the sequence is DHPKYSDMIV…GASGSFRLAK (74 aa). Residue Arg42 is modified to Citrulline. Positions 84 to 194 are disordered; the sequence is TKGVGASGSF…SSAKRAGKKK (111 aa). ADP-ribosylserine is present on Ser104. The segment covering 105–194 has biased composition (basic residues); that stretch reads VAFKKTKKEI…SSAKRAGKKK (90 aa).

The protein belongs to the histone H1/H5 family. In terms of processing, phosphorylated on Ser-17 in RNA edited version. Post-translationally, ADP-ribosylated on Ser-104 in response to DNA damage.

It is found in the nucleus. The protein localises to the chromosome. Its function is as follows. Histones H1 are necessary for the condensation of nucleosome chains into higher-order structures. The histones H1.0 are found in cells that are in terminal stages of differentiation or that have low rates of cell division. The protein is Histone H1.0 of Homo sapiens (Human).